The following is a 454-amino-acid chain: Kynurenine--oxoglutarate transaminase 3 (454 aa).

N-acetylserine is present on phenylalanine 2. Glycine 71 serves as a coordination point for substrate. Lysine 116 carries the post-translational modification N6-acetyllysine; alternate. Lysine 116 bears the N6-succinyllysine; alternate mark. Asparagine 218 serves as a coordination point for substrate. Lysine 280 bears the N6-(pyridoxal phosphate)lysine mark. Arginine 429 contributes to the substrate binding site.

It belongs to the class-I pyridoxal-phosphate-dependent aminotransferase family. In terms of assembly, homodimer. Pyridoxal 5'-phosphate is required as a cofactor.

The enzyme catalyses L-kynurenine + 2-oxoglutarate = kynurenate + L-glutamate + H2O. It catalyses the reaction L-kynurenine + glyoxylate = kynurenate + glycine + H2O. The catalysed reaction is 3-hydroxy-L-kynurenine + glyoxylate = xanthurenate + glycine + H2O. It carries out the reaction an S-substituted L-cysteine + H2O = a thiol + pyruvate + NH4(+). It functions in the pathway amino-acid degradation; L-kynurenine degradation; kynurenate from L-kynurenine: step 1/2. Its function is as follows. Catalyzes the irreversible transamination of the L-tryptophan metabolite L-kynurenine to form kynurenic acid (KA), an intermediate in the tryptophan catabolic pathway which is also a broad spectrum antagonist of the three ionotropic excitatory amino acid receptors among others. May catalyze the beta-elimination of S-conjugates and Se-conjugates of L-(seleno)cysteine, resulting in the cleavage of the C-S or C-Se bond. Has transaminase activity towards L-kynurenine, tryptophan, phenylalanine, serine, cysteine, methionine, histidine, glutamine and asparagine with glyoxylate as an amino group acceptor (in vitro). Has lower activity with 2-oxoglutarate as amino group acceptor (in vitro). In Homo sapiens (Human), this protein is Kynurenine--oxoglutarate transaminase 3.